A 65-amino-acid chain; its full sequence is Large ribosomal subunit protein bL35 (65 aa).

The protein belongs to the bacterial ribosomal protein bL35 family.

This chain is Large ribosomal subunit protein bL35, found in Polynucleobacter asymbioticus (strain DSM 18221 / CIP 109841 / QLW-P1DMWA-1) (Polynucleobacter necessarius subsp. asymbioticus).